Here is a 388-residue protein sequence, read N- to C-terminus: (S)-8-oxocitronellyl enol synthase ISY1 (388 aa).

Residues 35 to 37 (TGI), 63 to 64 (RR), 81 to 82 (DV), 105 to 106 (TW), and glutamine 143 contribute to the NADP(+) site. Catalysis depends on residues lysine 147 and tyrosine 178. NADP(+) contacts are provided by residues tyrosine 178, isoleucine 205, and 212-214 (SMM).

The protein belongs to the short-chain dehydrogenases/reductases (SDR) family.

It carries out the reaction (S)-8-oxocitronellyl enol + NADP(+) = (6E)-8-oxogeranial + NADPH + H(+). The enzyme catalyses (S)-8-oxocitronellyl enol + NAD(+) = (6E)-8-oxogeranial + NADH + H(+). Functionally, iridoid synthase that catalyzes the first step in generation of the iridoid ring scaffold using the linear monoterpene (6E)-8-oxogeranial as substrate. Iridoids comprise a large family of distinctive bicyclic monoterpenes that possess a wide range of pharmacological activities, including anticancer, anti-inflammatory, antifungal and antibacterial activities. Catalyzes the conversion of the linear monoterpene (6E)-8-oxogeranial to (S)-8-oxocitronellyl enol, a precursor of nepetalactones, which are metabolites that are both insect-repellent and have euphoric effect in cats. The chain is (S)-8-oxocitronellyl enol synthase ISY1 from Nepeta cataria (Catnip).